The chain runs to 300 residues: Ubiquitin thioesterase otu2 (300 aa).

2 disordered regions span residues 23–73 (RKQL…QQED) and 89–141 (TAEK…SEKM). The segment covering 48–61 (LSQKHATERQKLDK) has biased composition (basic and acidic residues). A compositionally biased stretch (acidic residues) spans 62–71 (GDEETNETQQ). Residues 89-109 (TAEKSSVQSSLNTKENTPQQP) are compositionally biased toward polar residues. Basic and acidic residues predominate over residues 115–141 (RQKERLERRKAEMKKMSEQAELESEKM). The 138-residue stretch at 161-298 (LVAVDIPADG…GAHYNSLLYR (138 aa)) folds into the OTU domain.

It localises to the cytoplasm. The catalysed reaction is Thiol-dependent hydrolysis of ester, thioester, amide, peptide and isopeptide bonds formed by the C-terminal Gly of ubiquitin (a 76-residue protein attached to proteins as an intracellular targeting signal).. Its function is as follows. Hydrolase that can remove conjugated ubiquitin from proteins and may therefore play an important regulatory role at the level of protein turnover by preventing degradation. This chain is Ubiquitin thioesterase otu2 (otu2), found in Schizosaccharomyces pombe (strain 972 / ATCC 24843) (Fission yeast).